We begin with the raw amino-acid sequence, 798 residues long: Cold shock domain-containing protein E1 (798 aa).

The CSD 1 domain maps to 26 to 87 (ETGVIEKLLT…RTGKPIAIKL (62 aa)). An N6-acetyllysine modification is found at K81. A Glycyl lysine isopeptide (Lys-Gly) (interchain with G-Cter in SUMO2) cross-link involves residue K91. At S123 the chain carries Phosphoserine. Residues 136 to 179 (VFYLTYTSEDVEGNVQLETGDKINFVIDNNKHTGAVSARNIMLL) enclose the CSD 2; truncated domain. The 60-residue stretch at 186-245 (YQGVVCAMKEAFGFIERGDVVKEIFFHYSEFKGDLETLQPGDDVEFTIKDRNGKEVATDV) folds into the CSD 3 domain. Phosphoserine is present on S276. Residues 297–337 (LPFGDKDTKSKVTLLEGDHVRFNISTDRRDKLERATNIEVL) form the CSD 4; truncated domain. 2 consecutive CSD domains span residues 349-410 (EMGV…AIRI) and 447-507 (NKGK…ATCV). At S514 the chain carries Phosphoserine. Residues 519-579 (LLGYVATLKD…KGNKVSAEKV (61 aa)) form the CSD 7 domain. S584 is modified (phosphoserine). 2 CSD domains span residues 610 to 670 (PTQI…AYNI) and 674 to 735 (RRAT…ACNV). The SUZ-C domain occupies 748 to 789 (PRPDRLVNRLKNITLDDASAPRLMVLRQPRGPDNSMGFGAER). T761 is subject to Phosphothreonine.

Belongs to the UNR family. In terms of assembly, component of a multi subunit autoregulatory ribonucleoprotein complex (ARC), at least composed of IGF2BP1, PABPC1 and CSDE1. Interacts with STRAP. Part of a complex associated with the FOS mCRD domain and consisting of PABPC1, PAIP1, HNRPD and SYNCRIP. The interaction with PABPC1 is direct and RNA-independent. Interacts with EIF4ENIF1/4E-T.

It is found in the cytoplasm. The protein localises to the stress granule. It localises to the P-body. Its function is as follows. RNA-binding protein involved in translationally coupled mRNA turnover. Implicated with other RNA-binding proteins in the cytoplasmic deadenylation/translational and decay interplay of the FOS mRNA mediated by the major coding-region determinant of instability (mCRD) domain. Required for efficient formation of stress granules. The sequence is that of Cold shock domain-containing protein E1 from Rattus norvegicus (Rat).